A 546-amino-acid polypeptide reads, in one-letter code: Chaperonin GroEL (546 aa).

Residues 30 to 33 (TLGP), K51, 87 to 91 (DGTTT), G415, 479 to 481 (NAA), and D495 each bind ATP. Positions 526–546 (KEDAPMPGGMPGGMGGMGMDM) are disordered. A compositionally biased stretch (gly residues) spans 534–546 (GMPGGMGGMGMDM).

It belongs to the chaperonin (HSP60) family. Forms a cylinder of 14 subunits composed of two heptameric rings stacked back-to-back. Interacts with the co-chaperonin GroES.

It localises to the cytoplasm. The enzyme catalyses ATP + H2O + a folded polypeptide = ADP + phosphate + an unfolded polypeptide.. Its function is as follows. Together with its co-chaperonin GroES, plays an essential role in assisting protein folding. The GroEL-GroES system forms a nano-cage that allows encapsulation of the non-native substrate proteins and provides a physical environment optimized to promote and accelerate protein folding. The protein is Chaperonin GroEL of Burkholderia cepacia (Pseudomonas cepacia).